Here is a 287-residue protein sequence, read N- to C-terminus: Co-chaperone protein DjlA (287 aa).

Over 1–6 (MQIFGK) the chain is Periplasmic. A helical membrane pass occupies residues 7–30 (ILGAFFGFLFGGVFGALFGLFIGH). Residues 31–287 (QFDKARRLSQ…DLIKKEKGFK (257 aa)) lie on the Cytoplasmic side of the membrane. Positions 192–213 (GGFGGQQHQSHHSSSHGGWQQA) are disordered. Positions 221–287 (DAYKILGIDA…DLIKKEKGFK (67 aa)) constitute a J domain.

Homodimer.

It localises to the cell inner membrane. Regulatory DnaK co-chaperone. Direct interaction between DnaK and DjlA is needed for the induction of the wcaABCDE operon, involved in the synthesis of a colanic acid polysaccharide capsule, possibly through activation of the RcsB/RcsC phosphotransfer signaling pathway. The colanic acid capsule may help the bacterium survive conditions outside the host. The chain is Co-chaperone protein DjlA from Vibrio vulnificus (strain CMCP6).